The primary structure comprises 328 residues: Olfactory receptor 4A16 (328 aa).

The Extracellular portion of the chain corresponds to 1–23 (MRPSSNVTEFVLLGLTQDPDVKK). N6 carries an N-linked (GlcNAc...) asparagine glycan. The helical transmembrane segment at 24–47 (TLFVMFLLIYIVTMVGNLLIWVTT) threads the bilayer. Over 48-55 (IGSPSLGS) the chain is Cytoplasmic. Residues 56–77 (LMYFFLAYLSLMDAIYSTAMSP) form a helical membrane-spanning segment. Over 78–98 (KLMIDLLCDKIAISLSACMGQ) the chain is Extracellular. C95 and C187 are disulfide-bonded. Residues 99 to 118 (LFIEHLLGGAEVFLLVVMAY) form a helical membrane-spanning segment. The Cytoplasmic segment spans residues 119 to 137 (DRYVAISKPLHYLNIMNRL). A helical membrane pass occupies residues 138-156 (VCILLLVVAMIGGFVHSVV). Residues 157–193 (QIVFLYSLPICGPNVIDHSVCDMYPLLELLCLDTYFI) are Extracellular-facing. The helical transmembrane segment at 194 to 217 (GLTVVANGGIICMVIFTFLLISCG) threads the bilayer. At 218-233 (VILNFLKTYSQEERHK) the chain is on the cytoplasmic side. The chain crosses the membrane as a helical span at residues 234-256 (ALPTCISHIIVVALVFVPCIFMY). Topologically, residues 257-267 (VRPVSNFPFDK) are extracellular. The helical transmembrane segment at 268 to 287 (LMTVFYSIITLMLNPLIYSL) threads the bilayer. Residues 288 to 328 (RQSEMKNAMKNLWCEKLSIVRKRVSPTLNIFIPSSKATNRR) lie on the Cytoplasmic side of the membrane.

The protein belongs to the G-protein coupled receptor 1 family.

The protein localises to the cell membrane. Its function is as follows. Odorant receptor. This Homo sapiens (Human) protein is Olfactory receptor 4A16 (OR4A16).